A 269-amino-acid chain; its full sequence is Formamidopyrimidine-DNA glycosylase (269 aa).

The active-site Schiff-base intermediate with DNA is proline 2. The Proton donor role is filled by glutamate 3. Residue lysine 57 is the Proton donor; for beta-elimination activity of the active site. DNA is bound by residues histidine 90, arginine 109, and lysine 150. The segment at 235-269 adopts an FPG-type zinc-finger fold; that stretch reads FVYGRAGEPCRICGEQIESIKLGQRSTFFCRHCQY. Residue arginine 259 is the Proton donor; for delta-elimination activity of the active site.

It belongs to the FPG family. Monomer. The cofactor is Zn(2+).

It carries out the reaction Hydrolysis of DNA containing ring-opened 7-methylguanine residues, releasing 2,6-diamino-4-hydroxy-5-(N-methyl)formamidopyrimidine.. The catalysed reaction is 2'-deoxyribonucleotide-(2'-deoxyribose 5'-phosphate)-2'-deoxyribonucleotide-DNA = a 3'-end 2'-deoxyribonucleotide-(2,3-dehydro-2,3-deoxyribose 5'-phosphate)-DNA + a 5'-end 5'-phospho-2'-deoxyribonucleoside-DNA + H(+). In terms of biological role, involved in base excision repair of DNA damaged by oxidation or by mutagenic agents. Acts as a DNA glycosylase that recognizes and removes damaged bases. Has a preference for oxidized purines, such as 7,8-dihydro-8-oxoguanine (8-oxoG). Has AP (apurinic/apyrimidinic) lyase activity and introduces nicks in the DNA strand. Cleaves the DNA backbone by beta-delta elimination to generate a single-strand break at the site of the removed base with both 3'- and 5'-phosphates. The chain is Formamidopyrimidine-DNA glycosylase from Photorhabdus laumondii subsp. laumondii (strain DSM 15139 / CIP 105565 / TT01) (Photorhabdus luminescens subsp. laumondii).